Here is a 374-residue protein sequence, read N- to C-terminus: DNA integrity scanning protein DisA (374 aa).

Positions 20–158 (DGLMRASLSA…DGQRRVLEDS (139 aa)) constitute a DAC domain. ATP is bound by residues Gly-87, Leu-105, and 118–122 (TRHRT).

It belongs to the DisA family. As to quaternary structure, homooctamer. Interacts with RadA. Requires Mg(2+) as cofactor.

It catalyses the reaction 2 ATP = 3',3'-c-di-AMP + 2 diphosphate. Diadenylate cyclase activity is inhibited by the interaction with RadA. Its function is as follows. Participates in a DNA-damage check-point that is active prior to asymmetric division when DNA is damaged. DisA forms globular foci that rapidly scan along the chromosomes during sporulation, searching for lesions. When a lesion is present, DisA pauses at the lesion site. This triggers a cellular response that culminates in a temporary block in sporulation initiation. Also has diadenylate cyclase activity, catalyzing the condensation of 2 ATP molecules into cyclic di-AMP (c-di-AMP). c-di-AMP acts as a signaling molecule that couples DNA integrity with progression of sporulation. The rise in c-di-AMP level generated by DisA while scanning the chromosome, operates as a positive signal that advances sporulation; upon encountering a lesion, the DisA focus arrests at the damaged site and halts c-di-AMP synthesis. This Streptomyces coelicolor (strain ATCC BAA-471 / A3(2) / M145) protein is DNA integrity scanning protein DisA.